The chain runs to 228 residues: Eukaryotic translation initiation factor 6 (228 aa).

This sequence belongs to the eIF-6 family. As to quaternary structure, monomer. Associates with the 60S ribosomal subunit.

Its subcellular location is the cytoplasm. The protein localises to the nucleus. It localises to the nucleolus. Its function is as follows. Binds to the 60S ribosomal subunit and prevents its association with the 40S ribosomal subunit to form the 80S initiation complex in the cytoplasm. May also be involved in ribosome biogenesis. This Guillardia theta (Cryptophyte) protein is Eukaryotic translation initiation factor 6.